Here is a 402-residue protein sequence, read N- to C-terminus: MPYLEIVLALLVLSFQLGHSDDDSGMCMAKEPCSEAPQQETKVDLYKATDNKYVALIQEALASYEPCQQANCSCHADVLKTDLRPFKGGISEQMVERARSYGTKYQIVDHRLYRQKDCMFPARCSGVEHFIKPNLPHLPDMELIINCRDWPQINRHWKQEKLPVLSFSKTDDYLDIMYPTWGFWEGGPAISLYPTGLGRWDQHRVSIKKAADSWKWEKKKAKAFFRGSRTSDERDPLVLLSRRKPELVDAQYTKNQAWKSPKDTLNAKPAQEVRLEDHCQYKYLFNFRGVAASFRFKHLFLCRSLVFHVGSEWQEFFYPSLKPWVHYVPVRVGATQEELEELIEFFAEHDDLAREIADRGFEHVWKHLRMKDVECYWRKLLRRYGKLVKYEVKRDHSLVEVY.

The N-terminal stretch at 1-20 is a signal peptide; the sequence is MPYLEIVLALLVLSFQLGHS. Cystine bridges form between C67–C74, C72–C375, C118–C124, and C279–C302. The N-linked (GlcNAc...) asparagine glycan is linked to N71. The Proton donor/acceptor role is filled by D149. The interaction with the consensus sequence C-X-S-X-[PA]-C in peptide substrates stretch occupies residues 189 to 194; it reads AISLYP. UDP-alpha-D-glucose is bound by residues 226 to 230, R234, 273 to 275, and 291 to 295; these read RGSRT, VRL, and AASFR.

It belongs to the glycosyltransferase 90 family.

The protein resides in the endoplasmic reticulum lumen. It is found in the secreted. It functions in the pathway protein modification; protein glycosylation. Its function is as follows. Protein O-glucosyltransferase. Catalyzes the reaction that attaches glucose through an O-glycosidic linkage to a conserved serine residue found in the consensus sequence C-X-S-X-[PA]-C in epidermal growth factor-like repeats. Regulates Notch signaling by glucosylating Notch in the ER, glucosylation is required for the correct folding and cleavage of Notch. The protein is O-glucosyltransferase rumi homolog of Aedes aegypti (Yellowfever mosquito).